Here is a 351-residue protein sequence, read N- to C-terminus: MNLVSLQNWLDNASFAVLFLTMLLYWIGAAFPGLPAINALGTAGMAIANLSIATLLGARWIEAGYFPLSNLYESLFFLSWGITTVHLIAENSSRSRLVGVFTTPVAMGIVAFATLTLPSDMQVSEPLVPALKSNWLMMHVSVMMLSYSALMVGSLLAIAFLVITRGNNIQLQGSSVGNGGYRTNGYRLMKAGELVSQPATPPVENNGFTRLESQNNGNSNTAVLNLATTPQTPTLTSTETLSPQRLSLAETLDNISYRIIGLGFPLLTIGIIAGAVWANEAWGSYWSWDPKETWALITWLVFAAYLHARITRGWQGRRPAILAASGFVVVWICYLGVNLLGKGLHSYGWFF.

A run of 8 helical transmembrane segments spans residues 17 to 37 (VLFLTMLLYWIGAAFPGLPAI), 38 to 58 (NALGTAGMAIANLSIATLLGA), 68 to 88 (LSNLYESLFFLSWGITTVHLI), 97 to 117 (LVGVFTTPVAMGIVAFATLTL), 143 to 163 (MMLSYSALMVGSLLAIAFLVI), 259 to 279 (IIGLGFPLLTIGIIAGAVWAN), 286 to 306 (WSWDPKETWALITWLVFAAYL), and 320 to 340 (AILAASGFVVVWICYLGVNLL).

The protein belongs to the CcmF/CycK/Ccl1/NrfE/CcsA family. May interact with ccs1.

The protein localises to the cellular thylakoid membrane. In terms of biological role, required during biogenesis of c-type cytochromes (cytochrome c6 and cytochrome f) at the step of heme attachment. This Nostoc sp. (strain PCC 7120 / SAG 25.82 / UTEX 2576) protein is Cytochrome c biogenesis protein CcsA.